The primary structure comprises 142 residues: Large ribosomal subunit protein bL17 (142 aa).

The protein belongs to the bacterial ribosomal protein bL17 family. In terms of assembly, part of the 50S ribosomal subunit. Contacts protein L32.

The polypeptide is Large ribosomal subunit protein bL17 (Chlamydia abortus (strain DSM 27085 / S26/3) (Chlamydophila abortus)).